Reading from the N-terminus, the 144-residue chain is Prefoldin subunit alpha (144 aa).

This sequence belongs to the prefoldin alpha subunit family. As to quaternary structure, heterohexamer of two alpha and four beta subunits.

The protein localises to the cytoplasm. In terms of biological role, molecular chaperone capable of stabilizing a range of proteins. Seems to fulfill an ATP-independent, HSP70-like function in archaeal de novo protein folding. The chain is Prefoldin subunit alpha from Methanococcus maripaludis (strain C5 / ATCC BAA-1333).